Here is a 169-residue protein sequence, read N- to C-terminus: MPNHIVLYQPEIPANTGNISRTCAGTDTYLHLIRPLGFSTDDKMLKRAGLDYWDNVKLSYYDSLDEFFEKNEGGEFYYITKFGRHVYSDIDYSDPNKDYFFVFGKETTGLPDALLQKNEENCLRIPMTDHIRSLNLSNTAAILAYEALRQQNFGALLQEPNYDRKIFQD.

4 residues coordinate S-adenosyl-L-methionine: isoleucine 79, glycine 104, isoleucine 125, and serine 133.

The protein belongs to the class IV-like SAM-binding methyltransferase superfamily. RNA methyltransferase TrmH family. TrmL subfamily.

It localises to the cytoplasm. It carries out the reaction cytidine(34) in tRNA + S-adenosyl-L-methionine = 2'-O-methylcytidine(34) in tRNA + S-adenosyl-L-homocysteine + H(+). It catalyses the reaction 5-carboxymethylaminomethyluridine(34) in tRNA(Leu) + S-adenosyl-L-methionine = 5-carboxymethylaminomethyl-2'-O-methyluridine(34) in tRNA(Leu) + S-adenosyl-L-homocysteine + H(+). Could methylate the ribose at the nucleotide 34 wobble position in tRNA. The polypeptide is Putative tRNA (cytidine(34)-2'-O)-methyltransferase (Listeria monocytogenes serotype 4b (strain F2365)).